Consider the following 380-residue polypeptide: Large ribosomal subunit protein mL38 (380 aa).

A mitochondrion-targeting transit peptide spans 1 to 26; it reads MAAPWWRVVLNGSRNWRGFSTSAALS. Positions 101–122 form a coiled coil; sequence QQLLERKRVLRELRTSVEEERA.

The protein belongs to the phosphatidylethanolamine-binding protein family. Mitochondrion-specific ribosomal protein mL38 subfamily. Component of the mitochondrial ribosome large subunit (39S) which comprises a 16S rRNA and about 50 distinct proteins.

The protein resides in the mitochondrion. In Bos taurus (Bovine), this protein is Large ribosomal subunit protein mL38 (MRPL38).